Here is a 182-residue protein sequence, read N- to C-terminus: UPF0254 protein MK0012 (182 aa).

It belongs to the UPF0254 family.

This chain is UPF0254 protein MK0012, found in Methanopyrus kandleri (strain AV19 / DSM 6324 / JCM 9639 / NBRC 100938).